The primary structure comprises 217 residues: Octanoyltransferase (217 aa).

A BPL/LPL catalytic domain is found at 32–207 (NDSPDELWIV…TLSQLLGYQH (176 aa)). Substrate contacts are provided by residues 71–78 (RGGQVTYH), 138–140 (SLG), and 151–153 (GLA). The active-site Acyl-thioester intermediate is cysteine 169.

This sequence belongs to the LipB family.

It is found in the cytoplasm. It carries out the reaction octanoyl-[ACP] + L-lysyl-[protein] = N(6)-octanoyl-L-lysyl-[protein] + holo-[ACP] + H(+). It participates in protein modification; protein lipoylation via endogenous pathway; protein N(6)-(lipoyl)lysine from octanoyl-[acyl-carrier-protein]: step 1/2. Functionally, catalyzes the transfer of endogenously produced octanoic acid from octanoyl-acyl-carrier-protein onto the lipoyl domains of lipoate-dependent enzymes. Lipoyl-ACP can also act as a substrate although octanoyl-ACP is likely to be the physiological substrate. The chain is Octanoyltransferase from Shewanella oneidensis (strain ATCC 700550 / JCM 31522 / CIP 106686 / LMG 19005 / NCIMB 14063 / MR-1).